The sequence spans 230 residues: UPF0173 metal-dependent hydrolase MM_2300 (230 aa).

The protein belongs to the UPF0173 family.

In Methanosarcina mazei (strain ATCC BAA-159 / DSM 3647 / Goe1 / Go1 / JCM 11833 / OCM 88) (Methanosarcina frisia), this protein is UPF0173 metal-dependent hydrolase MM_2300.